The primary structure comprises 178 residues: Hypoxanthine phosphoribosyltransferase (178 aa).

Diphosphate contacts are provided by Arg-43 and Gly-44. Glu-99 is a GMP binding site. Residue Glu-99 participates in IMP binding. Mg(2+) is bound by residues Glu-99 and Asp-100. The Proton acceptor role is filled by Asp-103. GMP contacts are provided by residues 103-108, Lys-131, and Asp-159; that span reads DSGNTL. IMP is bound by residues 103-108 and Lys-131; that span reads DSGNTL. Arg-165 contributes to the diphosphate binding site.

This sequence belongs to the purine/pyrimidine phosphoribosyltransferase family. As to quaternary structure, homotetramer. Mg(2+) is required as a cofactor.

The protein resides in the cytoplasm. It catalyses the reaction IMP + diphosphate = hypoxanthine + 5-phospho-alpha-D-ribose 1-diphosphate. The catalysed reaction is GMP + diphosphate = guanine + 5-phospho-alpha-D-ribose 1-diphosphate. It participates in purine metabolism; IMP biosynthesis via salvage pathway; IMP from hypoxanthine: step 1/1. Its function is as follows. Purine salvage pathway enzyme which catalyzes the transfer of the ribosyl-5-phosphate group from 5-phospho-alpha-D-ribose 1-diphosphate (PRPP) to the N9 position of hypoxanthine to yield IMP (inosine 5'-monophosphate). To a lesser extent, can also act on guanine leading to GMP, but shows a highly less efficient activity with xanthine. This Shigella flexneri protein is Hypoxanthine phosphoribosyltransferase (hpt).